A 933-amino-acid polypeptide reads, in one-letter code: Phospholipase SGR2 (933 aa).

Residues 1–14 are compositionally biased toward basic and acidic residues; sequence MEDRETHLGTREVN. Residues 1–22 form a disordered region; sequence MEDRETHLGTREVNETSPDLLK. Residue serine 444 is part of the active site. Disordered regions lie at residues 475-517 and 553-598; these read PDEE…GQDN and RGGQ…ESVN. Positions 505–517 are enriched in polar residues; sequence QLNNPEKITGQDN. A compositionally biased stretch (basic and acidic residues) spans 553-563; that stretch reads RGGQEDDHHDS. A coiled-coil region spans residues 593 to 631; it reads DKESVNSNNEERIKLLQDEVNSLRSKVAQLLSENARILS. The DDHD domain maps to 669–868; that stretch reads LEFKVDTFFA…ALFIIKHLYR (200 aa). A disordered region spans residues 871 to 903; that stretch reads PDGPNSPTESTEGDDSPKDSSRPHSWIDRREAD. A compositionally biased stretch (basic and acidic residues) spans 885-902; that stretch reads DSPKDSSRPHSWIDRREA.

Forms oligomers. Expressed in roots, hypocotyls, leaves, stems and floral buds, and, at low levels, in siliques.

Its subcellular location is the vacuole membrane. Functionally, involved in vacuolar formation or function (e.g. formation of vacuolar membrane 'bulbs'). Required for amyloplast sedimentation in the endodermis during shoot gravitropism, which are thus acting as statoliths. Particularly important for the negative gravitropism leading to leaf movement observed in darkness. In Arabidopsis thaliana (Mouse-ear cress), this protein is Phospholipase SGR2 (SGR2).